We begin with the raw amino-acid sequence, 266 residues long: Zinc transporter ZupT (266 aa).

Helical transmembrane passes span 8–28 (LLLT…ALAV), 36–56 (LALS…MEII), 71–91 (AGAW…WAID), 123–143 (GIFT…AVFF), 152–172 (GIVI…AVAV), 185–205 (FSLS…GYTL), 209–229 (FLTP…MVYI), and 246–266 (LAIT…LLLT). Fe(2+) contacts are provided by Asn134 and Glu137. The Zn(2+) site is built by Glu137 and His162. 3 residues coordinate Fe(2+): Asn163, Glu166, and Glu195. Glu166 is a binding site for Zn(2+).

The protein belongs to the ZIP transporter (TC 2.A.5) family. ZupT subfamily.

It localises to the cell inner membrane. The catalysed reaction is Zn(2+)(in) = Zn(2+)(out). Functionally, mediates zinc uptake. May also transport other divalent cations. This chain is Zinc transporter ZupT, found in Chlorobium luteolum (strain DSM 273 / BCRC 81028 / 2530) (Pelodictyon luteolum).